The primary structure comprises 455 residues: Phosphoglucosamine mutase (455 aa).

The active-site Phosphoserine intermediate is the Ser103. The Mg(2+) site is built by Ser103, Asp243, Asp245, and Asp247. Phosphoserine is present on Ser103.

Belongs to the phosphohexose mutase family. Mg(2+) is required as a cofactor. Activated by phosphorylation.

It carries out the reaction alpha-D-glucosamine 1-phosphate = D-glucosamine 6-phosphate. Catalyzes the conversion of glucosamine-6-phosphate to glucosamine-1-phosphate. This chain is Phosphoglucosamine mutase, found in Halorhodospira halophila (strain DSM 244 / SL1) (Ectothiorhodospira halophila (strain DSM 244 / SL1)).